A 334-amino-acid chain; its full sequence is N-acetyl-gamma-glutamyl-phosphate reductase (334 aa).

Cys-154 is a catalytic residue.

The protein belongs to the NAGSA dehydrogenase family. Type 1 subfamily.

It is found in the cytoplasm. It catalyses the reaction N-acetyl-L-glutamate 5-semialdehyde + phosphate + NADP(+) = N-acetyl-L-glutamyl 5-phosphate + NADPH + H(+). It functions in the pathway amino-acid biosynthesis; L-arginine biosynthesis; N(2)-acetyl-L-ornithine from L-glutamate: step 3/4. In terms of biological role, catalyzes the NADPH-dependent reduction of N-acetyl-5-glutamyl phosphate to yield N-acetyl-L-glutamate 5-semialdehyde. This Yersinia pseudotuberculosis serotype I (strain IP32953) protein is N-acetyl-gamma-glutamyl-phosphate reductase.